The sequence spans 2062 residues: Unconventional myosin-X (2062 aa).

An N-acetylmethionine modification is found at M1. Residues 63–739 (EGVDDMASLA…LEQKLEKRRE (677 aa)) form the Myosin motor domain. ATP is bound by residues N104, Y113, 160–165 (GAGKTE), and N215. Residues 619–641 (LHSLMATLSSSNPFFVRCIKPNT) are actin-binding. 3 IQ domains span residues 742-771 (IDRAAMVIRAHILGYLARKQYRKVLCGVVT), 765-794 (VLCGVVTIQKNYRAFLARKKFLHLKKAAIV), and 788-817 (LKKAAIVFQKQLRGQLARRVYRQLLAEKRE). Residues 814-882 (EKRELEEKKR…LTRELEKQRE (69 aa)) are SAH. A disordered region spans residues 822 to 844 (KRREEEKKREEEERERERAQREA). The stretch at 883–933 (NKQVEEILRLEKEIEDLQRMKERQELSLTEASLQKLQQLRDEELRRLEDEA) forms a coiled coil. Phosphoserine is present on residues S961, S964, and S967. Disordered stretches follow at residues 963–1047 (GSEI…VVPT) and 1062–1089 (QDSASLHNSSSGESTYCMPQNNGDLPSP). The span at 993–1007 (AEEEVDEGFEADDDA) shows a compositional bias: acidic residues. Residues 1062-1085 (QDSASLHNSSSGESTYCMPQNNGD) show a composition bias toward polar residues. T1162 is modified (phosphothreonine). 2 PH domains span residues 1216–1314 (EALK…QVHS) and 1396–1501 (EFIV…NVTD). Residues 1551–1699 (LPYGDINLNL…PSRDEIEALI (149 aa)) form the MyTH4 domain. Positions 1704 to 2048 (MTSTVYCHGG…AYISMIVKKR (345 aa)) constitute an FERM domain.

This sequence belongs to the TRAFAC class myosin-kinesin ATPase superfamily. Myosin family. Monomer, when in an inactive conformation in the cytosol. Homodimer in its active, membrane-bound conformation; antiparallel coiled coil-mediated dimer formation. Interacts with ECPAS. Interacts with DCC and ITGB5; the presence of DCC inhibits ITGB5 binding. Interacts with tubulin; ITGB5 or DCC binding inhibits tubulin binding. Interacts strongly with CALM3 and weakly with CALM, the CALM3 interaction is essential for function in filopodial extension and motility. Interacts with ITGB1, ITGB3 and ITGB5. Interacts with NEO1. Interacts with VASP. Post-translationally, the initiator methionine for isoform Headless is removed. As to expression, detected in brain, heart, kidney, liver, stomach, skeletal muscle, lung, testis and skin. Isoform Headless is expressed in embryonic and neuronal stem cells, and enriched in proliferating and migrating cells.

The protein resides in the cytoplasm. Its subcellular location is the cytosol. It localises to the cell projection. The protein localises to the lamellipodium. It is found in the ruffle. The protein resides in the cytoskeleton. Its subcellular location is the filopodium tip. It localises to the cell cortex. The protein localises to the filopodium membrane. Myosins are actin-based motor molecules with ATPase activity. Unconventional myosins serve in intracellular movements. MYO10 binds to actin filaments and actin bundles and functions as a plus end-directed motor. Moves with higher velocity and takes larger steps on actin bundles than on single actin filaments. The tail domain binds to membranous compartments containing phosphatidylinositol 3,4,5-trisphosphate or integrins, and mediates cargo transport along actin filaments. Regulates cell shape, cell spreading and cell adhesion. Stimulates the formation and elongation of filopodia. In hippocampal neurons it induces the formation of dendritic filopodia by trafficking the actin-remodeling protein VASP to the tips of filopodia, where it promotes actin elongation. Plays a role in formation of the podosome belt in osteoclasts. Its function is as follows. Functions as a dominant-negative regulator of isoform 1, suppressing its filopodia-inducing and axon outgrowth-promoting activities. In hippocampal neurons, it increases VASP retention in spine heads to induce spine formation and spine head expansion. This chain is Unconventional myosin-X (Myo10), found in Mus musculus (Mouse).